A 207-amino-acid chain; its full sequence is Small ribosomal subunit protein uS4 (207 aa).

The disordered stretch occupies residues 31–56; sequence KCKLDSKPGQHGRTSGARTSDYGNQL. The span at 42–53 shows a compositional bias: polar residues; that stretch reads GRTSGARTSDYG. An S4 RNA-binding domain is found at 97 to 157; that stretch reads TRLDNVVYRM…EKSKKQVRIV (61 aa).

Belongs to the universal ribosomal protein uS4 family. In terms of assembly, part of the 30S ribosomal subunit. Contacts protein S5. The interaction surface between S4 and S5 is involved in control of translational fidelity.

In terms of biological role, one of the primary rRNA binding proteins, it binds directly to 16S rRNA where it nucleates assembly of the body of the 30S subunit. Functionally, with S5 and S12 plays an important role in translational accuracy. The chain is Small ribosomal subunit protein uS4 from Herminiimonas arsenicoxydans.